The sequence spans 1272 residues: RING finger protein PFE0100w (1272 aa).

A disordered region spans residues 216 to 260 (INKINDVSNNDPKKDNNEKNTSSNNITHNNYNDISNNNNNNNNIN). Over residues 234 to 260 (KNTSSNNITHNNYNDISNNNNNNNNIN) the composition is skewed to low complexity. One copy of the CHCR repeat lies at 608–752 (YIQTINYLET…GYKFIKYYPQ (145 aa)). A helical membrane pass occupies residues 771–791 (IFIPLFLDNIDFLFMFIVKFL). 2 disordered regions span residues 842–862 (NQNH…NNSQ) and 908–970 (ENQT…IINK). Composition is skewed to low complexity over residues 850–861 (SDSHNLSDDNNS) and 909–956 (NQTN…IQTN). Residues 957–967 (KQKGNSTTNKI) are compositionally biased toward polar residues. Residues 1146 to 1182 (MNDMNKNINDKCIEIEKDKKELEKIKKKQLKKKYNFY) adopt a coiled-coil conformation. The segment at 1189 to 1224 (CSICKEILSVPMIHFLCKHSYHSYCLKDNNVCILCH) adopts an RING-type; atypical zinc-finger fold.

The protein resides in the membrane. This Plasmodium falciparum (isolate 3D7) protein is RING finger protein PFE0100w.